The following is a 566-amino-acid chain: Solute carrier family 2, facilitated glucose transporter member 9 (566 aa).

The segment at 1–31 (MARKQNRNSKELGLAPLADDTSHAGPPGPGR) is disordered. The Cytoplasmic segment spans residues 1-51 (MARKQNRNSKELGLAPLADDTSHAGPPGPGRALLECDHLRSGLPDGRRRKD). S9 is subject to Phosphoserine. Residues 52–72 (WSCSLLVASLAGAFGSSFLYG) form a helical membrane-spanning segment. Residues 73–107 (YNLSVVNAPTPYIKAFYNESWERRHGRPIDPDTLT) lie on the Extracellular side of the membrane. N74 and N90 each carry an N-linked (GlcNAc...) asparagine glycan. A helical transmembrane segment spans residues 108-128 (LLWSVTVSIFAIGGLVGTLMV). The Cytoplasmic portion of the chain corresponds to 129–140 (KMIGKVLGRKHT). Residues 141 to 161 (LLANNGFAISAALLMACSLQA) form a helical membrane-spanning segment. Residues 162–171 (GAFEMLIVGR) are Extracellular-facing. Residues 172-192 (FIMGIDGGIALSVLPMYLSEI) form a helical membrane-spanning segment. At 193 to 200 (SPKEIRGS) the chain is on the cytoplasmic side. The helical transmembrane segment at 201–221 (LGQVTAIFICIGVFTGQLLGL) threads the bilayer. Over 222–231 (PELLGKESTW) the chain is Extracellular. The chain crosses the membrane as a helical span at residues 232 to 252 (PYLFGVIVVPAVVQLLSLPFL). The Cytoplasmic segment spans residues 253 to 316 (PDSPRYLLLE…LRAPYVRWQV (64 aa)). The chain crosses the membrane as a helical span at residues 317 to 337 (VTVIVTMACYQLCGLNAIWFY). At 338–354 (TNSIFGKAGIPPAKIPY) the chain is on the extracellular side. A helical membrane pass occupies residues 355–375 (VTLSTGGIETLAAIFSGLVIE). Topologically, residues 376-381 (HLGRRP) are cytoplasmic. The chain crosses the membrane as a helical span at residues 382 to 402 (LLIGGFGLMALFFGTLTVTLT). The Extracellular portion of the chain corresponds to 403–415 (LQDRAPWVPYLSI). Residues 416 to 436 (VGILAIIASFCSGPGGIPFIL) traverse the membrane as a helical segment. At 437-451 (TGEFFQQSQRPAAFI) the chain is on the cytoplasmic side. A helical membrane pass occupies residues 452 to 472 (IAGTVNWLSNFAVGLLFPFIQ). The Extracellular segment spans residues 473-478 (KSLDTY). The chain crosses the membrane as a helical span at residues 479-499 (CFLVFATICMTGAIYLYFVLP). Residues 500–566 (ETKNRTYAEI…YMDDLTFQET (67 aa)) are Cytoplasmic-facing. A Phosphoserine modification is found at S514. The span at 524-539 (EKIDSAVTDGKTKGRP) shows a compositional bias: basic and acidic residues. The segment at 524–543 (EKIDSAVTDGKTKGRPEQVS) is disordered.

This sequence belongs to the major facilitator superfamily. Sugar transporter (TC 2.A.1.1) family.

The protein resides in the basolateral cell membrane. The protein localises to the apical cell membrane. It carries out the reaction urate(out) = urate(in). In terms of biological role, high-capacity urate transporter, which may play a role in the urate reabsorption by proximal tubules. May have a residual high-affinity, low-capacity glucose and fructose transporter activity. Transports urate at rates 45- to 60-fold faster than glucose. Does not transport galactose. May mediate small uptake of adenine but not of other nucleobases. This is Solute carrier family 2, facilitated glucose transporter member 9 from Pongo abelii (Sumatran orangutan).